The chain runs to 222 residues: Probable transaldolase (222 aa).

Catalysis depends on Lys91, which acts as the Schiff-base intermediate with substrate.

This sequence belongs to the transaldolase family. Type 3B subfamily.

The protein localises to the cytoplasm. It catalyses the reaction D-sedoheptulose 7-phosphate + D-glyceraldehyde 3-phosphate = D-erythrose 4-phosphate + beta-D-fructose 6-phosphate. It functions in the pathway carbohydrate degradation; pentose phosphate pathway; D-glyceraldehyde 3-phosphate and beta-D-fructose 6-phosphate from D-ribose 5-phosphate and D-xylulose 5-phosphate (non-oxidative stage): step 2/3. Its function is as follows. Transaldolase is important for the balance of metabolites in the pentose-phosphate pathway. This is Probable transaldolase from Chlorobaculum tepidum (strain ATCC 49652 / DSM 12025 / NBRC 103806 / TLS) (Chlorobium tepidum).